Reading from the N-terminus, the 154-residue chain is NADPH-dependent 7-cyano-7-deazaguanine reductase (154 aa).

Cys-52 functions as the Thioimide intermediate in the catalytic mechanism. Residue Asp-59 is the Proton donor of the active site. Substrate is bound by residues 74-76 (VES) and 93-94 (HE).

Belongs to the GTP cyclohydrolase I family. QueF type 1 subfamily.

It localises to the cytoplasm. The catalysed reaction is 7-aminomethyl-7-carbaguanine + 2 NADP(+) = 7-cyano-7-deazaguanine + 2 NADPH + 3 H(+). It functions in the pathway tRNA modification; tRNA-queuosine biosynthesis. In terms of biological role, catalyzes the NADPH-dependent reduction of 7-cyano-7-deazaguanine (preQ0) to 7-aminomethyl-7-deazaguanine (preQ1). The polypeptide is NADPH-dependent 7-cyano-7-deazaguanine reductase (Ruegeria sp. (strain TM1040) (Silicibacter sp.)).